Reading from the N-terminus, the 908-residue chain is Transferrin-binding protein A (908 aa).

Residues 1-24 form the signal peptide; the sequence is MQQQHLFRLNILCLSLMTALPVYA. Residues 38–45 carry the TonB box motif; that stretch reads DTIQVKAK. The TBDR plug domain occupies 51–176; sequence RDNEVTGLGK…LAGSVAFQTK (126 aa). Residues 187–908 enclose the TBDR beta-barrel domain; sequence QWGIQSKTAY…NYTFSLEMKF (722 aa). A TonB C-terminal box motif is present at residues 891–908; the sequence is NRYAAPGRNYTFSLEMKF.

It belongs to the TonB-dependent receptor family. As to quaternary structure, binds both human apo- and holo-transferrin (TF), via the TF C-terminus. Forms a large complex with TF and TbpB.

The protein resides in the cell outer membrane. Neisseria acquires iron by extracting it from serum transferrin (TF) in its human host. Acts as a TF receptor and is required for TF utilization. Binds both apo- and holo-TF, via the TF C-terminus. This chain is Transferrin-binding protein A, found in Neisseria meningitidis serogroup B.